We begin with the raw amino-acid sequence, 645 residues long: Sodium/hydrogen exchanger 9 (645 aa).

At 1 to 20 (MERQSRVMSEKDEYQFQHQG) the chain is on the lumenal side. The helical transmembrane segment at 21-41 (AVELLVFNFLLILTILTIWLF) threads the bilayer. Over 42–45 (KNHR) the chain is Cytoplasmic. Residues 46 to 66 (FRFLHETGGAMVYGLIMGLIL) form a helical membrane-spanning segment. The Lumenal portion of the chain corresponds to 67–126 (RYATAPTDIESGTVYDCVKLTFSPSTLLVNITDQVYEYKYKREISQHNINPHQGNAILEK). Residue asparagine 96 is glycosylated (N-linked (GlcNAc...) asparagine). A helical membrane pass occupies residues 127–147 (MTFDPEIFFNVLLPPIIFHAG). At 148–164 (YSLKKRHFFQNLGSILT) the chain is on the cytoplasmic side. The helical transmembrane segment at 165–185 (YAFLGTAISCIVIGLIMYGFV) threads the bilayer. The Lumenal portion of the chain corresponds to 186–203 (KAMIHAGQLKNGDFHFTD). The chain crosses the membrane as a helical span at residues 204–224 (CLFFGSLMSATDPVTVLAIFH). The Cytoplasmic segment spans residues 225–235 (ELHVDPDLYTL). Residues 236-256 (LFGESVLNDAVAIVLTYSISI) traverse the membrane as a helical segment. Topologically, residues 257-277 (YSPKENPNAFDAAAFFQSVGN) are lumenal. A helical membrane pass occupies residues 278–298 (FLGIFAGSFAMGSAYAIITAL). Residues 299–301 (LTK) lie on the Cytoplasmic side of the membrane. 2 helical membrane-spanning segments follow: residues 302–322 (FTKL…LSWS) and 323–343 (AFLS…FCGV). The Cytoplasmic segment spans residues 344 to 364 (TQAHYTYNNLSSDSKIRTKQL). A helical membrane pass occupies residues 365–385 (FEFMNFLAENVIFCYMGLALF). Residue threonine 386 is a topological domain, lumenal. A helical transmembrane segment spans residues 387–407 (FQNHIFNALFILGAFLAIFVA). The Cytoplasmic segment spans residues 408 to 429 (RACNIYPLSFLLNLGRKQKIPW). Residues 430-450 (NFQHMMMFSGLRGAIAFALAI) form a helical membrane-spanning segment. Topologically, residues 451 to 465 (RNTESQPKQMMFTTT) are lumenal. A helical transmembrane segment spans residues 466 to 486 (LLLVFFTVWVFGGGTTPMLTW). The Cytoplasmic portion of the chain corresponds to 487 to 645 (LQIRVGVDLD…EQTLGQSQLN (159 aa)). The interval 594–622 (QASSPCSPPARLGLDQKASPQTPGKENIY) is disordered.

It belongs to the monovalent cation:proton antiporter 1 (CPA1) transporter (TC 2.A.36) family. As to quaternary structure, homodimer; phosphatidylinositol-4,5-bisphosphate (PIP2) and phosphatidylinositol 3,4,5-trisphosphate (PIP3) could be involved in the dimer stabilization. Interacts (via the C-terminus) with RACK1. Interacts with CHP1. As to expression, ubiquitously expressed in all tissues tested. Expressed at highest levels in heart and skeletal muscle, followed by placenta, kidney, and liver. Expressed in the brain, in the medulla and spinal cord.

It is found in the late endosome membrane. The protein resides in the early endosome membrane. The protein localises to the recycling endosome membrane. It localises to the cell membrane. Its subcellular location is the cytoplasmic vesicle. It is found in the phagosome membrane. It catalyses the reaction Na(+)(in) + H(+)(out) = Na(+)(out) + H(+)(in). It carries out the reaction K(+)(in) + H(+)(out) = K(+)(out) + H(+)(in). Its function is as follows. Endosomal Na(+), K(+)/H(+) antiporter. Mediates the electroneutral exchange of endosomal luminal H(+) for a cytosolic Na(+) or K(+). By facilitating proton efflux, SLC9A9 counteracts the acidity generated by vacuolar (V)-ATPase, thereby limiting luminal acidification. Regulates organellar pH and consequently, e.g., endosome maturation and endocytic trafficking of plasma membrane receptors and neurotransporters. Promotes the recycling of transferrin receptors back to the cell surface to facilitate additional iron uptake in the brain. Regulates synaptic transmission by regulating the luminal pH of axonal endosomes. Regulates phagosome lumenal pH, thus affecting phagosome maturation, and consequently, microbicidal activity in macrophages. Can also be active at the cell surface of specialized cells, e.g., in the inner ear hair bundles uses the high K(+) of the endolymph to regulate intracelular pH. This Homo sapiens (Human) protein is Sodium/hydrogen exchanger 9.